A 265-amino-acid chain; its full sequence is Apolipoprotein A-I (265 aa).

The signal sequence occupies residues 1-18 (MKAVVLTLAVLFLTGSQA). 2 tandem repeats follow at residues 67–88 (LKLL…EQLG) and 89–110 (PVTQ…QEMS). Positions 67–265 (LKLLDNWDSL…DEASKKLNAQ (199 aa)) are 10 X approximate tandem repeats. At methionine 109 the chain carries Methionine sulfoxide. A 3; half-length repeat occupies 111 to 121 (KDLEEVKKKVQ). 5 tandem repeats follow at residues 122–142 (PYLD…RQKM), 144–165 (PLGA…EKLS), 166–187 (PLAE…QHVA), 188–209 (PYSD…EGGG), and 210–230 (SLAE…EKAK). Position 135 is a methionine sulfoxide (methionine 135). One copy of the 9; half-length repeat lies at 231–241 (PALEDLRQGLL). Copy 10 of the repeat occupies 242–265 (PVLENLKVSILAAIDEASKKLNAQ).

Belongs to the apolipoprotein A1/A4/E family. Homodimer. Interacts with APOA1BP and CLU. Component of a sperm activating protein complex (SPAP), consisting of APOA1, an immunoglobulin heavy chain, an immunoglobulin light chain and albumin. Interacts with NDRG1. Interacts with SCGB3A2. Interacts with NAXE and YJEFN3. Post-translationally, glycosylated. Palmitoylated. In terms of processing, phosphorylation sites are present in the extracellular medium. In terms of tissue distribution, major protein of plasma HDL, also found in chylomicrons. Synthesized predominantly in the intestine and the liver.

It localises to the secreted. Functionally, participates in the reverse transport of cholesterol from tissues to the liver for excretion by promoting cholesterol efflux from tissues and by acting as a cofactor for the lecithin cholesterol acyltransferase (LCAT). As part of the SPAP complex, activates spermatozoa motility. This chain is Apolipoprotein A-I (APOA1), found in Sus scrofa (Pig).